The sequence spans 89 residues: UPF0237 protein DIP1286 (89 aa).

In terms of domain architecture, ACT spans 4–78 (IISVTGADHT…KDQNLVIRIQ (75 aa)).

Belongs to the UPF0237 family.

The sequence is that of UPF0237 protein DIP1286 from Corynebacterium diphtheriae (strain ATCC 700971 / NCTC 13129 / Biotype gravis).